We begin with the raw amino-acid sequence, 253 residues long: HTH-type transcriptional regulator YdeO (253 aa).

Residues 137–233 (GKVRNIVNMK…GNSPKRVSKE (97 aa)) enclose the HTH araC/xylS-type domain. DNA-binding regions (H-T-H motif) lie at residues 154–175 (KDIC…KQEQ) and 200–223 (VNKI…RKHF).

Its function is as follows. Induces the expression of gadE. Could also regulate the expression of other genes involved in acid resistance. This Shigella flexneri protein is HTH-type transcriptional regulator YdeO (ydeO).